We begin with the raw amino-acid sequence, 248 residues long: 3-deoxy-manno-octulosonate cytidylyltransferase (248 aa).

This sequence belongs to the KdsB family. Requires Mg(2+) as cofactor.

Its subcellular location is the cytoplasm. It carries out the reaction 3-deoxy-alpha-D-manno-oct-2-ulosonate + CTP = CMP-3-deoxy-beta-D-manno-octulosonate + diphosphate. The protein operates within nucleotide-sugar biosynthesis; CMP-3-deoxy-D-manno-octulosonate biosynthesis; CMP-3-deoxy-D-manno-octulosonate from 3-deoxy-D-manno-octulosonate and CTP: step 1/1. Its pathway is bacterial outer membrane biogenesis; lipopolysaccharide biosynthesis. In terms of biological role, activates KDO (a required 8-carbon sugar) for incorporation into bacterial lipopolysaccharide in Gram-negative bacteria. The protein is 3-deoxy-manno-octulosonate cytidylyltransferase of Escherichia coli O157:H7.